The following is a 571-amino-acid chain: Proline--tRNA ligase (571 aa).

It belongs to the class-II aminoacyl-tRNA synthetase family. ProS type 1 subfamily. Homodimer.

The protein localises to the cytoplasm. It carries out the reaction tRNA(Pro) + L-proline + ATP = L-prolyl-tRNA(Pro) + AMP + diphosphate. Catalyzes the attachment of proline to tRNA(Pro) in a two-step reaction: proline is first activated by ATP to form Pro-AMP and then transferred to the acceptor end of tRNA(Pro). As ProRS can inadvertently accommodate and process non-cognate amino acids such as alanine and cysteine, to avoid such errors it has two additional distinct editing activities against alanine. One activity is designated as 'pretransfer' editing and involves the tRNA(Pro)-independent hydrolysis of activated Ala-AMP. The other activity is designated 'posttransfer' editing and involves deacylation of mischarged Ala-tRNA(Pro). The misacylated Cys-tRNA(Pro) is not edited by ProRS. This chain is Proline--tRNA ligase, found in Aliivibrio salmonicida (strain LFI1238) (Vibrio salmonicida (strain LFI1238)).